The chain runs to 246 residues: MADS-box transcription factor 14 (246 aa).

The 61-residue stretch at methionine 1–serine 61 folds into the MADS-box domain. One can recognise a K-box domain in the interval glutamine 88–valine 178. Residues lysine 180–phenylalanine 199 form a disordered region.

Highly expressed in sterile lemmas, at intermediate levels in stamens, and weakly in lemmas, paleas and carpels.

It is found in the nucleus. In terms of biological role, probable transcription factor. The protein is MADS-box transcription factor 14 (MADS14) of Oryza sativa subsp. indica (Rice).